A 304-amino-acid chain; its full sequence is Acetaldehyde dehydrogenase 1 (304 aa).

11-14 serves as a coordination point for NAD(+); it reads SGNI. The active-site Acyl-thioester intermediate is Cys130. NAD(+) is bound by residues 161–169 and Asn272; that span reads SVGPGTRAN.

The protein belongs to the acetaldehyde dehydrogenase family.

The enzyme catalyses acetaldehyde + NAD(+) + CoA = acetyl-CoA + NADH + H(+). In Azoarcus sp. (strain BH72), this protein is Acetaldehyde dehydrogenase 1 (lapF).